The chain runs to 301 residues: Probable alpha-L-glutamate ligase (301 aa).

The ATP-grasp domain maps to 104-287 (LQLLSRRGVG…VAGLIIQYLE (184 aa)). ATP contacts are provided by residues K141, 178-179 (EY), D187, and 211-213 (RSN). Mg(2+) is bound by residues D248, E260, and N262. Mn(2+) is bound by residues D248, E260, and N262.

This sequence belongs to the RimK family. It depends on Mg(2+) as a cofactor. Mn(2+) is required as a cofactor.

The sequence is that of Probable alpha-L-glutamate ligase from Stutzerimonas stutzeri (strain A1501) (Pseudomonas stutzeri).